Consider the following 236-residue polypeptide: 2,3,4,5-tetrahydropyridine-2,6-dicarboxylate N-acetyltransferase (236 aa).

It belongs to the transferase hexapeptide repeat family. DapH subfamily.

The enzyme catalyses (S)-2,3,4,5-tetrahydrodipicolinate + acetyl-CoA + H2O = L-2-acetamido-6-oxoheptanedioate + CoA. It functions in the pathway amino-acid biosynthesis; L-lysine biosynthesis via DAP pathway; LL-2,6-diaminopimelate from (S)-tetrahydrodipicolinate (acetylase route): step 1/3. Catalyzes the transfer of an acetyl group from acetyl-CoA to tetrahydrodipicolinate. The sequence is that of 2,3,4,5-tetrahydropyridine-2,6-dicarboxylate N-acetyltransferase from Lactobacillus helveticus (strain DPC 4571).